The chain runs to 262 residues: GTP cyclohydrolase 1 type 2 homolog (262 aa).

The a divalent metal cation site is built by His-64, His-65, Asp-103, His-224, and Glu-228.

This sequence belongs to the GTP cyclohydrolase I type 2/NIF3 family. In terms of assembly, homohexamer.

The sequence is that of GTP cyclohydrolase 1 type 2 homolog from Clostridium perfringens (strain 13 / Type A).